Here is a 591-residue protein sequence, read N- to C-terminus: Maintenance of mitochondrial morphology protein 1 (591 aa).

The Lumenal segment spans residues Met1–Gly83. Residues Leu84–Phe104 traverse the membrane as a helical segment. Residues Gly105–Thr591 are Cytoplasmic-facing. Disordered regions lie at residues Pro138 to Thr159, Tyr170 to Ser189, Pro334 to His398, and Glu479 to Thr591. Composition is skewed to polar residues over residues Ser146 to Thr159 and Tyr170 to Ser179. The span at Lys180–Ser189 shows a compositional bias: basic residues. One can recognise an SMP-LTD domain in the interval Gln192 to Pro462. Polar residues predominate over residues Thr336–Arg371. A compositionally biased stretch (low complexity) spans Pro379–Ala389. Gly residues-rich tracts occupy residues Thr496–Tyr525 and Gly536–Gly550. The segment covering Gly563 to Phe578 has biased composition (basic and acidic residues).

The protein belongs to the MMM1 family. Homodimer. Component of the ER-mitochondria encounter structure (ERMES) or MDM complex, composed of MMM1, MDM10, MDM12 and MDM34. An MMM1 homodimer associates with one molecule of MDM12 on each side in a pairwise head-to-tail manner, and the SMP-LTD domains of MMM1 and MDM12 generate a continuous hydrophobic tunnel for phospholipid trafficking.

It localises to the endoplasmic reticulum membrane. Its function is as follows. Component of the ERMES/MDM complex, which serves as a molecular tether to connect the endoplasmic reticulum (ER) and mitochondria. Components of this complex are involved in the control of mitochondrial shape and protein biogenesis, and function in nonvesicular lipid trafficking between the ER and mitochondria. The MDM12-MMM1 subcomplex functions in the major beta-barrel assembly pathway that is responsible for biogenesis of all outer membrane beta-barrel proteins, and acts in a late step after the SAM complex. The MDM10-MDM12-MMM1 subcomplex further acts in the TOM40-specific pathway after the action of the MDM12-MMM1 complex. Essential for establishing and maintaining the structure of mitochondria and maintenance of mtDNA nucleoids. This chain is Maintenance of mitochondrial morphology protein 1, found in Ajellomyces capsulatus (strain G186AR / H82 / ATCC MYA-2454 / RMSCC 2432) (Darling's disease fungus).